A 147-amino-acid chain; its full sequence is TRAF-interacting protein with FHA domain-containing protein B (147 aa).

An FHA domain is found at leucine 36 to serine 108.

Interacts with TIFA. In terms of tissue distribution, expressed at high levels in spleen and at moderate levels in lung, thymus, and small intestine.

Inhibits TIFA-mediated TRAF6 activation possibly by inducing a conformational change in TIFA. The chain is TRAF-interacting protein with FHA domain-containing protein B from Mus musculus (Mouse).